We begin with the raw amino-acid sequence, 395 residues long: Elongation factor Tu (395 aa).

Residues 10–204 (KPHVNVGTIG…AVDEYIPEPV (195 aa)) enclose the tr-type G domain. Residues 19–26 (GHVDHGKT) form a G1 region. 19-26 (GHVDHGKT) is a GTP binding site. T26 contributes to the Mg(2+) binding site. The interval 60–64 (GITIA) is G2. Residues 81-84 (DCPG) are G3. Residues 81–85 (DCPGH) and 136–139 (NKVD) contribute to the GTP site. Residues 136–139 (NKVD) form a G4 region. A G5 region spans residues 174–176 (SAL).

Belongs to the TRAFAC class translation factor GTPase superfamily. Classic translation factor GTPase family. EF-Tu/EF-1A subfamily. In terms of assembly, monomer.

Its subcellular location is the cytoplasm. It carries out the reaction GTP + H2O = GDP + phosphate + H(+). In terms of biological role, GTP hydrolase that promotes the GTP-dependent binding of aminoacyl-tRNA to the A-site of ribosomes during protein biosynthesis. This Exiguobacterium sp. (strain ATCC BAA-1283 / AT1b) protein is Elongation factor Tu.